We begin with the raw amino-acid sequence, 316 residues long: 4-hydroxy-3-methylbut-2-enyl diphosphate reductase (316 aa).

Cys12 is a [4Fe-4S] cluster binding site. The (2E)-4-hydroxy-3-methylbut-2-enyl diphosphate site is built by His41 and His74. The dimethylallyl diphosphate site is built by His41 and His74. Residues His41 and His74 each coordinate isopentenyl diphosphate. Cys96 serves as a coordination point for [4Fe-4S] cluster. His124 contributes to the (2E)-4-hydroxy-3-methylbut-2-enyl diphosphate binding site. His124 contacts dimethylallyl diphosphate. His124 lines the isopentenyl diphosphate pocket. The Proton donor role is filled by Glu126. Residue Thr167 coordinates (2E)-4-hydroxy-3-methylbut-2-enyl diphosphate. Cys197 contributes to the [4Fe-4S] cluster binding site. Ser225, Ser226, Asn227, and Ser269 together coordinate (2E)-4-hydroxy-3-methylbut-2-enyl diphosphate. The dimethylallyl diphosphate site is built by Ser225, Ser226, Asn227, and Ser269. Positions 225, 226, 227, and 269 each coordinate isopentenyl diphosphate.

This sequence belongs to the IspH family. Homodimer. [4Fe-4S] cluster is required as a cofactor.

The catalysed reaction is isopentenyl diphosphate + 2 oxidized [2Fe-2S]-[ferredoxin] + H2O = (2E)-4-hydroxy-3-methylbut-2-enyl diphosphate + 2 reduced [2Fe-2S]-[ferredoxin] + 2 H(+). The enzyme catalyses dimethylallyl diphosphate + 2 oxidized [2Fe-2S]-[ferredoxin] + H2O = (2E)-4-hydroxy-3-methylbut-2-enyl diphosphate + 2 reduced [2Fe-2S]-[ferredoxin] + 2 H(+). The protein operates within isoprenoid biosynthesis; dimethylallyl diphosphate biosynthesis; dimethylallyl diphosphate from (2E)-4-hydroxy-3-methylbutenyl diphosphate: step 1/1. It functions in the pathway isoprenoid biosynthesis; isopentenyl diphosphate biosynthesis via DXP pathway; isopentenyl diphosphate from 1-deoxy-D-xylulose 5-phosphate: step 6/6. Functionally, catalyzes the conversion of 1-hydroxy-2-methyl-2-(E)-butenyl 4-diphosphate (HMBPP) into a mixture of isopentenyl diphosphate (IPP) and dimethylallyl diphosphate (DMAPP). Acts in the terminal step of the DOXP/MEP pathway for isoprenoid precursor biosynthesis. This Salmonella schwarzengrund (strain CVM19633) protein is 4-hydroxy-3-methylbut-2-enyl diphosphate reductase.